The primary structure comprises 382 residues: Alcohol dehydrogenase 4 (382 aa).

This sequence belongs to the iron-containing alcohol dehydrogenase family. Homodimer. Requires Zn(2+) as cofactor. It depends on Fe(2+) as a cofactor.

Its subcellular location is the mitochondrion. It catalyses the reaction a primary alcohol + NAD(+) = an aldehyde + NADH + H(+). The enzyme catalyses a secondary alcohol + NAD(+) = a ketone + NADH + H(+). Inhibited by EDTA. Functionally, reduces acetaldehyde to ethanol during glucose fermentation. Specific for ethanol. Shows drastically reduced activity towards primary alcohols from 4 carbon atoms upward. Isomers of aliphatic alcohol, as well as secondary alcohols and glycerol are not used at all. The sequence is that of Alcohol dehydrogenase 4 (ADH4) from Saccharomyces cerevisiae (strain YJM789) (Baker's yeast).